A 307-amino-acid polypeptide reads, in one-letter code: Olfactory receptor 12D2 (307 aa).

Topologically, residues 1–23 (MLNTTSVTEFLLLGVTDIQELQP) are extracellular. Asparagine 3 is a glycosylation site (N-linked (GlcNAc...) asparagine). A helical membrane pass occupies residues 24 to 44 (FLFVVFLTIYFISVTGNGAVL). Over 45-52 (MIVISDPR) the chain is Cytoplasmic. The helical transmembrane segment at 53–73 (LHSLMYFFLGNLSYLDICYST) threads the bilayer. The Extracellular portion of the chain corresponds to 74–97 (VTLPKMLQNFLSTHKAISFLGCIS). A disulfide bond links cysteine 95 and cysteine 187. The chain crosses the membrane as a helical span at residues 98-118 (QLHFFHSLGSTESMLFAVMAF). The Cytoplasmic segment spans residues 119 to 137 (DLSVAICKPLRYTVIMNPQ). The chain crosses the membrane as a helical span at residues 138-158 (LCTQMAITIWVIGFFHALLHS). Residues 159-195 (VMTSRLNFCGSNRIHHFLCDIKPLLKLACGNTELNQW) lie on the Extracellular side of the membrane. A helical transmembrane segment spans residues 196–215 (LLSTVTGTIAMGPFFLTLLS). Residues 216–236 (YFYIITYLFFKTRSCSMLCKA) lie on the Cytoplasmic side of the membrane. Residues 237–257 (LSTCASHFMVVILFYAPVLFT) traverse the membrane as a helical segment. Topologically, residues 258-270 (YIHPALESFMDQD) are extracellular. The chain crosses the membrane as a helical span at residues 271–291 (RIVAIMYTVVTPVLNPLIYTL). The Cytoplasmic segment spans residues 292–307 (RNKEVKGALGRVIRRL).

This sequence belongs to the G-protein coupled receptor 1 family.

Its subcellular location is the cell membrane. Odorant receptor. This chain is Olfactory receptor 12D2 (OR12D2), found in Homo sapiens (Human).